We begin with the raw amino-acid sequence, 393 residues long: Dual-specificity RNA methyltransferase RlmN (393 aa).

E114 serves as the catalytic Proton acceptor. The Radical SAM core domain occupies 120–359 (EGDRATLCVS…VIVRKTRGDD (240 aa)). The cysteines at positions 127 and 364 are disulfide-linked. The [4Fe-4S] cluster site is built by C134, C138, and C141. S-adenosyl-L-methionine contacts are provided by residues 188–189 (GE), S220, 242–244 (SLH), and N321. C364 serves as the catalytic S-methylcysteine intermediate.

Belongs to the radical SAM superfamily. RlmN family. Requires [4Fe-4S] cluster as cofactor.

It localises to the cytoplasm. It carries out the reaction adenosine(2503) in 23S rRNA + 2 reduced [2Fe-2S]-[ferredoxin] + 2 S-adenosyl-L-methionine = 2-methyladenosine(2503) in 23S rRNA + 5'-deoxyadenosine + L-methionine + 2 oxidized [2Fe-2S]-[ferredoxin] + S-adenosyl-L-homocysteine. It catalyses the reaction adenosine(37) in tRNA + 2 reduced [2Fe-2S]-[ferredoxin] + 2 S-adenosyl-L-methionine = 2-methyladenosine(37) in tRNA + 5'-deoxyadenosine + L-methionine + 2 oxidized [2Fe-2S]-[ferredoxin] + S-adenosyl-L-homocysteine. In terms of biological role, specifically methylates position 2 of adenine 2503 in 23S rRNA and position 2 of adenine 37 in tRNAs. m2A2503 modification seems to play a crucial role in the proofreading step occurring at the peptidyl transferase center and thus would serve to optimize ribosomal fidelity. The protein is Dual-specificity RNA methyltransferase RlmN of Haemophilus ducreyi (strain 35000HP / ATCC 700724).